A 63-amino-acid polypeptide reads, in one-letter code: uncharacterized protein (63 aa).

A helical transmembrane segment spans residues 37 to 57; sequence IFFPTTFDVLLLAILIFLACA.

The protein localises to the cell membrane. This is an uncharacterized protein from Bacillus subtilis (strain 168).